A 474-amino-acid polypeptide reads, in one-letter code: Calcitonin receptor (474 aa).

An N-terminal signal peptide occupies residues 1-24 (MRFTFTSRCLALFLLLNHPTPILP). Topologically, residues 25 to 146 (AFSNQTYPTI…FTPEKLKNAY (122 aa)) are extracellular. Asn28, Asn73, Asn125, and Asn130 each carry an N-linked (GlcNAc...) asparagine glycan. Intrachain disulfides connect Cys55–Cys81, Cys72–Cys112, and Cys95–Cys134. Residues 147–169 (VLYYLAIVGHSLSIFTLVISLGI) traverse the membrane as a helical segment. Topologically, residues 170–181 (FVFFRSLGCQRV) are cytoplasmic. The chain crosses the membrane as a helical span at residues 182 to 202 (TLHKNMFLTYILNSMIIIIHL). Topologically, residues 203 to 219 (VEVVPNGELVRRDPVSC) are extracellular. Cys219 and Cys289 are joined by a disulfide. Residues 220-242 (KILHFFHQYMMACNYFWMLCEGI) form a helical membrane-spanning segment. The Cytoplasmic portion of the chain corresponds to 243–259 (YLHTLIVVAVFTEKQRL). Residues 260 to 280 (RWYYLLGWGFPLVPTTIHAIT) form a helical membrane-spanning segment. Topologically, residues 281–296 (RAVYFNDNCWLSVETH) are extracellular. The chain crosses the membrane as a helical span at residues 297 to 320 (LLYIIHGPVMAALVVNFFFLLNIV). Residues 321–340 (RVLVTKMRETHEAESHMYLK) lie on the Cytoplasmic side of the membrane. Residues 341-359 (AVKATMILVPLLGIQFVVF) form a helical membrane-spanning segment. The Extracellular portion of the chain corresponds to 360 to 367 (PWRPSNKM). Residues 368–394 (LGKIYDYVMHSLIHFQGFFVATIYCFC) traverse the membrane as a helical segment. Topologically, residues 395–474 (NNEVQTTVKR…LNIIEQESSA (80 aa)) are cytoplasmic.

The protein belongs to the G-protein coupled receptor 2 family. In terms of assembly, heterodimer of CALCR and RAMP1, RAMP2 or RAMP3; the receptor complexes function as AMYR1, AMYR2 and AMYR3 receptors, respectively, and respond to amylin/IAPP, calcitonin/CT and CGRP1 ligands. Interacts with GPRASP2.

The protein resides in the cell membrane. With respect to regulation, sensitive to cholera toxin. Its function is as follows. G protein-coupled receptor activated by ligand peptides amylin (IAPP), calcitonin (CT/CALCA) and calcitonin gene-related peptide type 1 (CGRP1/CALCA). CALCR interacts with receptor-activity-modifying proteins RAMP1, 2 and 3 to form receptor complexes AMYR1, 2 and 3, respectively. IAPP, CT and CGRP1 activate CALCR and AMYRs with distinct modes of receptor activation resulting in specific phenotypes. Ligand binding causes a conformation change that triggers signaling via guanine nucleotide-binding proteins (G proteins) and modulates the activity of downstream effectors. Activates cAMP-dependent pathway. Functionally, non-functional protein. Unable to couple to G proteins and activate adenylyl cyclase. Does not undergo receptor internalization following ligand binding. The sequence is that of Calcitonin receptor from Homo sapiens (Human).